The sequence spans 150 residues: D-aminoacyl-tRNA deacylase (150 aa).

A Gly-cisPro motif, important for rejection of L-amino acids motif is present at residues 133-134; sequence GP.

The protein belongs to the DTD family. In terms of assembly, homodimer.

The protein localises to the cytoplasm. The enzyme catalyses glycyl-tRNA(Ala) + H2O = tRNA(Ala) + glycine + H(+). The catalysed reaction is a D-aminoacyl-tRNA + H2O = a tRNA + a D-alpha-amino acid + H(+). Functionally, an aminoacyl-tRNA editing enzyme that deacylates mischarged D-aminoacyl-tRNAs. Also deacylates mischarged glycyl-tRNA(Ala), protecting cells against glycine mischarging by AlaRS. Acts via tRNA-based rather than protein-based catalysis; rejects L-amino acids rather than detecting D-amino acids in the active site. By recycling D-aminoacyl-tRNA to D-amino acids and free tRNA molecules, this enzyme counteracts the toxicity associated with the formation of D-aminoacyl-tRNA entities in vivo and helps enforce protein L-homochirality. This is D-aminoacyl-tRNA deacylase from Kocuria rhizophila (strain ATCC 9341 / DSM 348 / NBRC 103217 / DC2201).